Reading from the N-terminus, the 227-residue chain is Cytochrome c oxidase subunit 2 (227 aa).

Topologically, residues 1–14 (MAYPFQLGFQDATS) are mitochondrial intermembrane. The chain crosses the membrane as a helical span at residues 15–45 (PIMEELLHFHDHTLMIVFLISSLVLYIITLM). Residues 46-59 (LTTKLTHTSTMDAQ) lie on the Mitochondrial matrix side of the membrane. The chain crosses the membrane as a helical span at residues 60–87 (EVETVWTILPAIILILIALPSLRILYMM). Residues 88-227 (DEVNNPSLTV…FFEKWSASML (140 aa)) lie on the Mitochondrial intermembrane side of the membrane. H161, C196, E198, C200, H204, and M207 together coordinate Cu cation. E198 contributes to the Mg(2+) binding site.

Belongs to the cytochrome c oxidase subunit 2 family. Component of the cytochrome c oxidase (complex IV, CIV), a multisubunit enzyme composed of 14 subunits. The complex is composed of a catalytic core of 3 subunits MT-CO1, MT-CO2 and MT-CO3, encoded in the mitochondrial DNA, and 11 supernumerary subunits COX4I, COX5A, COX5B, COX6A, COX6B, COX6C, COX7A, COX7B, COX7C, COX8 and NDUFA4, which are encoded in the nuclear genome. The complex exists as a monomer or a dimer and forms supercomplexes (SCs) in the inner mitochondrial membrane with NADH-ubiquinone oxidoreductase (complex I, CI) and ubiquinol-cytochrome c oxidoreductase (cytochrome b-c1 complex, complex III, CIII), resulting in different assemblies (supercomplex SCI(1)III(2)IV(1) and megacomplex MCI(2)III(2)IV(2)). Found in a complex with TMEM177, COA6, COX18, COX20, SCO1 and SCO2. Interacts with TMEM177 in a COX20-dependent manner. Interacts with COX20. Interacts with COX16. Cu cation is required as a cofactor.

Its subcellular location is the mitochondrion inner membrane. It carries out the reaction 4 Fe(II)-[cytochrome c] + O2 + 8 H(+)(in) = 4 Fe(III)-[cytochrome c] + 2 H2O + 4 H(+)(out). Its function is as follows. Component of the cytochrome c oxidase, the last enzyme in the mitochondrial electron transport chain which drives oxidative phosphorylation. The respiratory chain contains 3 multisubunit complexes succinate dehydrogenase (complex II, CII), ubiquinol-cytochrome c oxidoreductase (cytochrome b-c1 complex, complex III, CIII) and cytochrome c oxidase (complex IV, CIV), that cooperate to transfer electrons derived from NADH and succinate to molecular oxygen, creating an electrochemical gradient over the inner membrane that drives transmembrane transport and the ATP synthase. Cytochrome c oxidase is the component of the respiratory chain that catalyzes the reduction of oxygen to water. Electrons originating from reduced cytochrome c in the intermembrane space (IMS) are transferred via the dinuclear copper A center (CU(A)) of subunit 2 and heme A of subunit 1 to the active site in subunit 1, a binuclear center (BNC) formed by heme A3 and copper B (CU(B)). The BNC reduces molecular oxygen to 2 water molecules using 4 electrons from cytochrome c in the IMS and 4 protons from the mitochondrial matrix. The polypeptide is Cytochrome c oxidase subunit 2 (MT-CO2) (Balaenoptera musculus (Blue whale)).